A 327-amino-acid chain; its full sequence is Vacuolar protein sorting-associated protein 26A (327 aa).

Positions 306-327 (RTNFHQRFESPESQASAEQPEM) are disordered. S315 is subject to Phosphoserine. Polar residues predominate over residues 316–327 (PESQASAEQPEM).

This sequence belongs to the VPS26 family. In terms of assembly, component of the heterotrimeric retromer cargo-selective complex (CSC), also described as vacuolar protein sorting subcomplex (VPS), formed by VPS26 (VPS26A or VPS26B), VPS29 and VPS35. The CSC has a highly elongated structure with VPS26 and VPS29 binding independently at opposite distal ends of VPS35 as central platform. The CSC is believed to associate with variable sorting nexins to form functionally distinct retromer complex variants. The originally described retromer complex (also called SNX-BAR retromer) is a pentamer containing the CSC and a heterodimeric membrane-deforming subcomplex formed between SNX1 or SNX2 and SNX5 or SNX6 (also called SNX-BAR subcomplex); the respective CSC and SNX-BAR subcomplexes associate with low affinity. The CSC associates with SNX3 to form a SNX3-retromer complex. The CSC associates with SNX27, the WASH complex and the SNX-BAR subcomplex to form the SNX27-retromer complex. Interacts with VPS29, VPS35, SNX27, SNX1, SNX2, SNX5, SNX6, SNX3, RAB7A, ECPAS, EHD1, WASHC5, SORL1.

The protein resides in the cytoplasm. Its subcellular location is the endosome membrane. It localises to the early endosome. Functionally, acts as a component of the retromer cargo-selective complex (CSC). The CSC is believed to be the core functional component of retromer or respective retromer complex variants acting to prevent missorting of selected transmembrane cargo proteins into the lysosomal degradation pathway. The recruitment of the CSC to the endosomal membrane involves RAB7A and SNX3. The SNX-BAR retromer mediates retrograde transport of cargo proteins from endosomes to the trans-Golgi network (TGN) and is involved in endosome-to-plasma membrane transport for cargo protein recycling. The SNX3-retromer mediates the retrograde endosome-to-TGN transport of WLS distinct from the SNX-BAR retromer pathway. The SNX27-retromer is believed to be involved in endosome-to-plasma membrane trafficking and recycling of a broad spectrum of cargo proteins. The CSC complex seems to act as recruitment hub for other proteins, such as the WASH complex and TBC1D5. Required for retrograde transport of lysosomal enzyme receptor IGF2R. Required to regulate transcytosis of the polymeric immunoglobulin receptor (pIgR-pIgA). Required for the endosomal localization of WASHC2 (indicative for the WASH complex). Required for the endosomal localization of TBC1D5. Mediates retromer cargo recognition of SORL1 and is involved in trafficking of SORL1 implicated in sorting and processing of APP. Involved in retromer-independent lysosomal sorting of F2R. Involved in recycling of ADRB2. Acts redundantly with VSP26B in SNX-27 mediated endocytic recycling of SLC2A1/GLUT1. Enhances the affinity of SNX27 for PDZ-binding motifs in cargo proteins. This Rattus norvegicus (Rat) protein is Vacuolar protein sorting-associated protein 26A (Vps26a).